A 371-amino-acid polypeptide reads, in one-letter code: Chaperone protein DnaJ (371 aa).

Residues 5-69 (DYYEVLGLSK…QKRAQYDQFG (65 aa)) form the J domain. The CR-type zinc-finger motif lies at 133-215 (GKELNVEIPV…CHGSGKVRKR (83 aa)). Cys146, Cys149, Cys163, Cys166, Cys189, Cys192, Cys203, and Cys206 together coordinate Zn(2+). 4 CXXCXGXG motif repeats span residues 146-153 (CDTCKGSG), 163-170 (CKHCSGSG), 189-196 (CGHCSGTG), and 203-210 (CTTCHGSG).

The protein belongs to the DnaJ family. In terms of assembly, homodimer. Zn(2+) is required as a cofactor.

It localises to the cytoplasm. In terms of biological role, participates actively in the response to hyperosmotic and heat shock by preventing the aggregation of stress-denatured proteins and by disaggregating proteins, also in an autonomous, DnaK-independent fashion. Unfolded proteins bind initially to DnaJ; upon interaction with the DnaJ-bound protein, DnaK hydrolyzes its bound ATP, resulting in the formation of a stable complex. GrpE releases ADP from DnaK; ATP binding to DnaK triggers the release of the substrate protein, thus completing the reaction cycle. Several rounds of ATP-dependent interactions between DnaJ, DnaK and GrpE are required for fully efficient folding. Also involved, together with DnaK and GrpE, in the DNA replication of plasmids through activation of initiation proteins. This is Chaperone protein DnaJ from Bacillus cereus (strain ATCC 10987 / NRS 248).